Reading from the N-terminus, the 464-residue chain is GDNF family receptor alpha-2 (464 aa).

The first 21 residues, 1-21 (MILANVFCLFFFLDETLRSLA), serve as a signal peptide directing secretion. 11 disulfide bridges follow: C40–C93, C95–C105, C161–C222, C168–C174, C185–C200, C195–C241, C224–C229, C251–C323, C258–C264, C275–C293, and C285–C347. N52 is a glycosylation site (N-linked (GlcNAc...) asparagine). N-linked (GlcNAc...) asparagine glycosylation is present at N357. Positions 363–392 (VSPKGPSFQATQAPRVEKTPSLPDDLSDST) are disordered. Residues 381–392 (TPSLPDDLSDST) are compositionally biased toward low complexity. A glycan (N-linked (GlcNAc...) asparagine) is linked at N413. S444 is lipidated: GPI-anchor amidated serine. The propeptide at 445–464 (RARPSAALTVLSVLMLKLAL) is removed in mature form.

The protein belongs to the GDNFR family. As to quaternary structure, interacts with NRTN ligand and RET: forms a 2:2:2 ternary complex composed of NRTN ligand, GFRA2 and RET receptor. Also forms a 4:4:4 tetrameric complex composed of 4 copies of NRTN ligand, GFRA2 and RET receptor, which prevents endocytosis of RET. Interacts with SORL1. Found in both brain and placenta.

It localises to the cell membrane. Functionally, receptor for neurturin (NRTN), a growth factor that supports the survival of sympathetic neurons. NRTN-binding leads to autophosphorylation and activation of the RET receptor. Also able to mediate GDNF signaling through the RET tyrosine kinase receptor. Participates in NRTN-induced 'Ser-727' phosphorylation of STAT3. The sequence is that of GDNF family receptor alpha-2 (GFRA2) from Homo sapiens (Human).